The primary structure comprises 507 residues: MSGTLARSVMVLGTTSGAGKSWLTTALCRYYARQGLKVAPFKAQNMSNNARVVAGGEIGSAQYFQALAARAEPDVRMNPLLLKPEKDTQSQVILMGQVDAELSRMPWRGRSASVWPVIARALDELLAENDVVVIEGAGSPAEINLKSSDIVNMRVAQHTGASCLLVTDIDRGGAFAHLYGTWAMLDEAERQLIKGFVLNKFRGDASLLAPGPQMLQEMTGVPTVATLPMWWQHGLPEEDGVFDMAPTLGTGVSTLPPEGAELARGGPSLRSPRPVIAVIAYPRISNLDEFQPLKNVPGVHLKWVRSPGELAGVDWIILPGSKHTSGDLAWLRAQGLDRAVAAHAEQGGAVLGVCGGLQMLGEALIDPHGIDGNAPGLGLLPVVTVFEEGKTVQRRQARFGELAGAWAALSGVGLQGYEIHHGQTAPHTAMAAAGDIAHGVMAEGLAWQNTRGNVLGLYLHGMFEDPAVLQALFGATVPTLDAVFDGLADYIEQHFEPGVLQSLIATP.

The region spanning 273 to 468 is the GATase cobBQ-type domain; the sequence is RPVIAVIAYP…LHGMFEDPAV (196 aa). Cys-354 functions as the Nucleophile in the catalytic mechanism. Residue His-460 is part of the active site.

This sequence belongs to the CobB/CobQ family. CobQ subfamily.

The protein operates within cofactor biosynthesis; adenosylcobalamin biosynthesis. Its function is as follows. Catalyzes amidations at positions B, D, E, and G on adenosylcobyrinic A,C-diamide. NH(2) groups are provided by glutamine, and one molecule of ATP is hydrogenolyzed for each amidation. This Polaromonas sp. (strain JS666 / ATCC BAA-500) protein is Cobyric acid synthase.